A 150-amino-acid chain; its full sequence is 3-hydroxyacyl-[acyl-carrier-protein] dehydratase FabZ (150 aa).

The active site involves H54.

Belongs to the thioester dehydratase family. FabZ subfamily.

It localises to the cytoplasm. The catalysed reaction is a (3R)-hydroxyacyl-[ACP] = a (2E)-enoyl-[ACP] + H2O. In terms of biological role, involved in unsaturated fatty acids biosynthesis. Catalyzes the dehydration of short chain beta-hydroxyacyl-ACPs and long chain saturated and unsaturated beta-hydroxyacyl-ACPs. This Vibrio campbellii (strain ATCC BAA-1116) protein is 3-hydroxyacyl-[acyl-carrier-protein] dehydratase FabZ.